We begin with the raw amino-acid sequence, 118 residues long: Acidic phospholipase A2 CM-I (118 aa).

Intrachain disulfides connect Cys11–Cys70, Cys26–Cys117, Cys28–Cys44, Cys43–Cys98, Cys50–Cys91, Cys59–Cys84, and Cys77–Cys89. Residues Tyr27, Gly29, and Gly31 each coordinate Ca(2+). His47 is an active-site residue. Asp48 provides a ligand contact to Ca(2+). Residue Asp92 is part of the active site.

This sequence belongs to the phospholipase A2 family. Group I subfamily. D49 sub-subfamily. Requires Ca(2+) as cofactor. Expressed by the venom gland.

The protein resides in the secreted. It catalyses the reaction a 1,2-diacyl-sn-glycero-3-phosphocholine + H2O = a 1-acyl-sn-glycero-3-phosphocholine + a fatty acid + H(+). Functionally, snake venom phospholipase A2 (PLA2) that causes myonecrosis when injected intramuscularly, shows indirect hemolytic activity, abolishes twitches evoked by indirect stimulation earlier than those by direct stimulation (in the mouse phrenic nerve-diaphragm preparation) but does not produce complete neuromuscular block (up to 30 ug/ml) (in the chick biventer cervicis nerve-muscle preparation). PLA2 catalyzes the calcium-dependent hydrolysis of the 2-acyl groups in 3-sn-phosphoglycerides. The protein is Acidic phospholipase A2 CM-I of Naja mossambica (Mozambique spitting cobra).